The sequence spans 348 residues: Heat-inducible transcription repressor HrcA (348 aa).

Belongs to the HrcA family.

Negative regulator of class I heat shock genes (grpE-dnaK-dnaJ and groELS operons). Prevents heat-shock induction of these operons. In Pelotomaculum thermopropionicum (strain DSM 13744 / JCM 10971 / SI), this protein is Heat-inducible transcription repressor HrcA.